The primary structure comprises 146 residues: Probable cyclic pyranopterin monophosphate synthase (146 aa).

Substrate-binding positions include L66–H68 and M102–E103. D117 is an active-site residue.

The protein belongs to the MoaC family. In terms of assembly, homohexamer; trimer of dimers.

The enzyme catalyses (8S)-3',8-cyclo-7,8-dihydroguanosine 5'-triphosphate = cyclic pyranopterin phosphate + diphosphate. Its pathway is cofactor biosynthesis; molybdopterin biosynthesis. Catalyzes the conversion of (8S)-3',8-cyclo-7,8-dihydroguanosine 5'-triphosphate to cyclic pyranopterin monophosphate (cPMP). This is Probable cyclic pyranopterin monophosphate synthase from Aeropyrum pernix (strain ATCC 700893 / DSM 11879 / JCM 9820 / NBRC 100138 / K1).